We begin with the raw amino-acid sequence, 524 residues long: Sterol O-acyltransferase 2 (524 aa).

The disordered stretch occupies residues 1-31 (MEPKAPQLRRRERQGEEQENGACGEGNTRTH). Over 1 to 118 (MEPKAPQLRR…LDELMGVQHF (118 aa)) the chain is Cytoplasmic. Residue H117 participates in cholesterol binding. Residues 119-140 (RTIYHMFIAGLCVLIISTLAID) traverse the membrane as a helical segment. The Lumenal portion of the chain corresponds to 141-160 (FIDEGRLMLEFDLLLFSFGQ). Residues 161-186 (LPLALMMWVPMFLSTLLLPYQTLRLW) traverse the membrane as a helical segment. The Cytoplasmic portion of the chain corresponds to 187–198 (ARPRSGGAWTLG). Residues 199-222 (ASLGCVLLAAHAAVLCVLPVHVSV) form a helical membrane-spanning segment. The Lumenal portion of the chain corresponds to 223–230 (KHELPPAS). Residues 231-254 (RCVLVFEQVRFLMKSYSFLRETVP) form a helical membrane-spanning segment. Residues 255–295 (GIFCVRGGKGICTPSFSSYLYFLFCPTLIYRETYPRTPSIR) are Cytoplasmic-facing. C279 bears the Cysteine sulfenic acid (-SOH); alternate mark. C279 participates in a covalent cross-link: Glycyl cysteine thioester (Cys-Gly) (interchain with G-Cter in ubiquitin); alternate. The chain crosses the membrane as a helical span at residues 296 to 328 (WNYVAKNFAQALGCLLYACFILGRLCVPVFANM). The Lumenal segment spans residues 329-345 (SREPFSTRALLLSILHA). Residues 346–371 (TGPGIFMLLLIFFAFLHCWLNAFAEM) traverse the membrane as a helical segment. The Cytoplasmic segment spans residues 372 to 419 (LRFGDRMFYRDWWNSTSFSNYYRTWNVVVHDWLYSYVYQDGLWLLGRQ). The FYXDWWN motif signature appears at 379–385 (FYRDWWN). The an acyl-CoA site is built by N391, R394, N397, H401, Y409, and S432. The chain crosses the membrane as a helical span at residues 420–444 (GRGAAMLGVFLVSALVHEYIFCFVL). Residue H436 is part of the active site. The Lumenal portion of the chain corresponds to 445-450 (GFFYPV). A helical transmembrane segment spans residues 451–466 (MLILFLVVGGLLNFTM). Over 467–472 (NDRHTG) the chain is Cytoplasmic. A helical membrane pass occupies residues 473–504 (PAWNILMWTFLFLGQGIQVSLYCQEWYARRHC). Topologically, residues 505 to 524 (PLPQPTFWELVTPRSWSCHP) are lumenal.

The protein belongs to the membrane-bound acyltransferase family. Sterol o-acyltransferase subfamily. In terms of assembly, may form homo- or heterodimers. Interacts with INSIG1; the interaction is direct and promotes association with AMFR/gp78. Polyubiquitinated by AMFR/gp78 at Cys-279, leading to its degradation when the lipid levels are low. Association with AMFR/gp78 is mediated via interaction with INSIG1. High concentration of cholesterol and fatty acid results in Cys-279 oxidation, preventing ubiquitination at the same site, resulting in protein stabilization. In terms of processing, oxidized at Cys-279: high concentration of cholesterol and fatty acid induce reactive oxygen species, which oxidizes Cys-279, preventing ubiquitination at the same site, and resulting in protein stabilization.

The protein resides in the endoplasmic reticulum membrane. It catalyses the reaction a sterol + a long-chain fatty acyl-CoA = a long-chain 3-hydroxysterol ester + CoA. It carries out the reaction cholesterol + an acyl-CoA = a cholesterol ester + CoA. The catalysed reaction is cholesterol + (9Z)-octadecenoyl-CoA = cholesteryl (9Z-octadecenoate) + CoA. The enzyme catalyses (5Z,8Z,11Z,14Z,17Z)-eicosapentaenoyl-CoA + cholesterol = (5Z,8Z,11Z,14Z,17Z-eicosapentaenoyl)-cholesterol + CoA. It catalyses the reaction (9Z,12Z,15Z)-octadecatrienoyl-CoA + cholesterol = (9Z,12Z,15Z-octadecatrienoyl)-cholesterol + CoA. It carries out the reaction (5Z,8Z,11Z,14Z)-eicosatetraenoyl-CoA + cholesterol = cholesteryl (5Z,8Z,11Z,14Z)-eicosatetraenoate + CoA. Catalyzes the formation of fatty acid-cholesterol esters, which are less soluble in membranes than cholesterol. Plays a role in lipoprotein assembly and dietary cholesterol absorption. Utilizes oleoyl-CoA ((9Z)-octadecenoyl-CoA) and linolenoyl-CoA ((9Z,12Z,15Z)-octadecatrienoyl-CoA) as substrates. May provide cholesteryl esters for lipoprotein secretion from hepatocytes and intestinal mucosa. The chain is Sterol O-acyltransferase 2 from Rattus norvegicus (Rat).